A 275-amino-acid polypeptide reads, in one-letter code: MISNKIAILLAVLVVAVACAQARVALKHRSVQALPRFLPRPKYDVGHRIVGGFEIDVSETPYQVSLQYFNSHRCGGSVLNSKWILTAAHCTVNLQPSSLAVRLGSSRHASGGTVVRVARVLEHPNYDDSTIDYDFSLMELESELTFSDVVQPVSLPDQDEAVEDGTMTIVSGWGNTQSAAESNAILRAANVPTVNQKECTIAYSSSGGITDRMLCAGYKRGGKDACQGDSGGPLVVDGKLVGVVSWGFGCAMPGYPGVYARVAVVRDWVRENSGA.

Residues Met1–Ala22 form the signal peptide. Residues Arg23–Arg48 constitute a propeptide, activation peptide. Positions Ile49 to Gly274 constitute a Peptidase S1 domain. The cysteines at positions 74 and 90 are disulfide-linked. Active-site charge relay system residues include His89 and Asp134. 2 disulfides stabilise this stretch: Cys199–Cys215 and Cys226–Cys250. Catalysis depends on Ser230, which acts as the Charge relay system.

The protein belongs to the peptidase S1 family. Expressed in the midgut. Expression levels drop a few hours after blood feeding and pick up again 28 hours later.

The protein localises to the secreted. It catalyses the reaction Preferential cleavage: Arg-|-Xaa, Lys-|-Xaa.. Constitutive trypsin that is expressed 2 days after emergence, coinciding with host seeking behavior of the female. In Anopheles gambiae (African malaria mosquito), this protein is Trypsin-3 (TRYP3).